A 4911-amino-acid chain; its full sequence is Histone-lysine N-methyltransferase 2C (4911 aa).

Residues 1–101 (MSSEEDKSVE…EDAEAEVDNS (101 aa)) are disordered. Residues 12–28 (PQPPPPPPEEPGAPAPS) show a composition bias toward pro residues. Phosphoserine is present on residues serine 28 and serine 46. Residues 34 to 46 (KRPRGRPRKDGAS) constitute a DNA-binding region (a.T hook). Positions 50 to 59 (RARKKPRSRG) are enriched in basic residues. A compositionally biased stretch (acidic residues) spans 64-81 (EDEDSMDGLETTETETIV). At serine 89 the chain carries Phosphoserine. A coiled-coil region spans residues 92-112 (EDAEAEVDNSKQLIPTLQRSV). Serine 113 is subject to Phosphoserine. The interval 164–203 (RNQPSNKKDIDDNSNGTYEKMQNSAPRKQRGQRKERSPQQ) is disordered. The span at 176-189 (NSNGTYEKMQNSAP) shows a compositional bias: polar residues. Serine 200 is modified (phosphoserine). The C2HC pre-PHD-type 1; degenerate zinc finger occupies 227–262 (ELSLVGLPDAIDIQALFDSTGTCWAHHRCVEWSLGV). 4 PHD-type zinc fingers span residues 283–331 (ERCA…PEHI), 341–391 (DANC…CKVC), 388–438 (CKVC…CRIC), and 464–520 (DNLC…CKHL). An RING-type zinc finger spans residues 344 to 389 (CAVCDSPGDLLDQFFCTTCGQHYHGMCLDIAVTPLKRAGWQCPECK). Residues 436 to 489 (RICIECGTRSSSQWHHNCLICDNCYQQQDNLCPFCGKCYHPELQKDMLHCNMCK) form the DHHC domain. The stretch at 644 to 672 (EDKMEVTENIEVVTHQITVQQEQLQLLEE) forms a coiled coil. A compositionally biased stretch (basic and acidic residues) spans 721 to 730 (QGEKEQKENS). Residues 721 to 742 (QGEKEQKENSELSTGLMDSEMT) form a disordered region. Lysine 758 carries the post-translational modification N6-acetyllysine. Low complexity predominate over residues 763 to 791 (SSETESSFSSSADISKADVSSSPTPSSDL). Disordered stretches follow at residues 763–798 (SSET…DMLH), 828–864 (PAIT…DISE), and 885–912 (GRGS…RSKL). The span at 830-842 (ITKRKFSPGRPRS) shows a compositional bias: basic residues. A compositionally biased stretch (polar residues) spans 845 to 856 (GAWSTHNTVSPP). Position 854 is a phosphoserine (serine 854). 3 consecutive PHD-type zinc fingers follow at residues 957–1010 (QDMC…CTVC), 1007–1057 (CTVC…CVWC), and 1084–1139 (LSSC…CRPY). The disordered stretch occupies residues 1215–1324 (AVLQTPPDIQ…LPCRDDGWSE (110 aa)). A compositionally biased stretch (basic and acidic residues) spans 1224–1270 (QSEHSRDGEMDDSREGELMDCDGKSESSPEREAVDDETKGVEGTDGV). The residue at position 1301 (serine 1301) is a Phosphoserine. Residues 1338 to 1366 (TESTEKIKKRYRKRKNKLEETFPAYLQEA) are a coiled coil. The span at 1406–1416 (PSLDPLLSSSS) shows a compositional bias: low complexity. Disordered regions lie at residues 1406 to 1431 (PSLD…DDPL) and 1458 to 1485 (HSDI…PLSE). The segment covering 1467–1482 (DPSSLPQPNVNQSSRP) has biased composition (polar residues). The residue at position 1508 (lysine 1508) is an N6-acetyllysine. Disordered stretches follow at residues 1604 to 1630 (FNPM…DTMS) and 1709 to 2448 (VQMS…SPVA). Polar residues-rich tracts occupy residues 1610–1620 (DPNNSWTSSAP) and 1709–1727 (VQMS…SIDP). Residues 1729–1753 (SRIDSELFKDPLKQRESEHEQEWKF) show a composition bias toward basic and acidic residues. The stretch at 1754-1787 (RQQMRQKSKQQAKIEATQKLEQVKNEQQQQQQQQ) forms a coiled coil. Lysine 1772 is subject to N6-acetyllysine. The span at 1788–1823 (FGSQHLLVQSGSDTPSSGIQSPLTPQPGNGNMSPAQ) shows a compositional bias: polar residues. The segment covering 1851-1860 (QAPPPPPAPS) has biased composition (pro residues). Low complexity predominate over residues 1861–1875 (RIPIQDSLSQAQTSQ). Over residues 1927–1945 (TPLSSVSRPLQMNETTANR) the composition is skewed to polar residues. Serine 1987 bears the Phosphoserine mark. An N6-acetyllysine modification is found at lysine 2009. 4 stretches are compositionally biased toward polar residues: residues 2054–2065 (QDPYGSVSQASR), 2085–2094 (FSHNQSNDPY), 2115–2131 (AFSQ…QDPY), and 2144–2159 (SYSQ…TDPY). A compositionally biased stretch (low complexity) spans 2173–2187 (PYSQQPQTPRPSTQT). Polar residues-rich tracts occupy residues 2302-2319 (SPMT…SQTA), 2335-2353 (CASS…SGVS), and 2362-2375 (SGVT…NMAQ). The segment covering 2377–2389 (DTEKLRQRQKLRE) has biased composition (basic and acidic residues). Positions 2390-2399 (IILQQQQQKK) are enriched in low complexity. 2 positions are modified to asymmetric dimethylarginine: arginine 2454 and arginine 2571. 4 disordered regions span residues 2589 to 2694 (RHGN…SDDP), 2793 to 2887 (EPKK…RETA), 2925 to 2954 (EKSD…VSSL), and 2989 to 3029 (VNPG…SGPQ). 2 stretches are compositionally biased toward polar residues: residues 2629–2645 (PPSQ…SSMV) and 2661–2682 (PLST…TQPS). The segment covering 2793-2811 (EPKKKEQENKTLVLSDKHS) has biased composition (basic and acidic residues). 2 positions are modified to N6-acetyllysine: lysine 2802 and lysine 2809. Positions 2814 to 2832 (KKSTVTNEVKTEVLSPNSK) are enriched in polar residues. Serine 2828 bears the Phosphoserine mark. At lysine 2832 the chain carries N6-acetyllysine. A compositionally biased stretch (basic and acidic residues) spans 2833 to 2849 (VESKCETEKNDENKDNV). Residues 2851–2860 (TPCSQASAHS) show a composition bias toward polar residues. A compositionally biased stretch (basic and acidic residues) spans 2861 to 2884 (DLNDGEKTSLHPCDPDLFEKRTNR). N6-acetyllysine is present on lysine 2867. Residues 3011–3029 (TQTGPQTSQSGTSSMSGPQ) show a composition bias toward low complexity. 3 coiled-coil regions span residues 3054-3081 (LLQD…QRSE), 3173-3272 (NDSQ…QQQQ), and 3391-3433 (FSES…EMEQ). A compositionally biased stretch (basic residues) spans 3205 to 3221 (HRKSKKALSAKQRTAKK). Disordered stretches follow at residues 3205–3241 (HRKS…TEQQ), 3353–3409 (PPIA…EQQE), 3527–3583 (PNFS…HSYP), 3596–3919 (IIPE…MANG), and 4024–4053 (VKEE…SRRN). Composition is skewed to basic and acidic residues over residues 3222-3238 (AGRE…KHVT) and 3395-3409 (FQER…EQQE). 4 stretches are compositionally biased toward polar residues: residues 3527 to 3549 (PNFS…QSPV), 3564 to 3583 (ANSS…HSYP), 3637 to 3658 (ISET…QADQ), and 3684 to 3701 (LPNS…TYAN). Basic and acidic residues predominate over residues 3703 to 3725 (EVDKLSMETPAKTEEIKLEKAET). Lysine 3714 is modified (N6-acetyllysine). Serine 3758 carries the post-translational modification Phosphoserine. Residues 3803-3812 (DCTKDNKLVE) show a composition bias toward basic and acidic residues. The segment covering 3878-3892 (MYSSTDTFTHLKQQN) has biased composition (polar residues). Over residues 3897 to 3911 (PPTPPASLPPTPPPM) the composition is skewed to pro residues. Serine 4034 bears the Phosphoserine mark. Asymmetric dimethylarginine is present on arginine 4139. Phosphoserine is present on serine 4267. The segment at 4399–4439 (YRKCCFCHEEGDGLTDGPARLLNLDLDLWVHLNCALWSTEV) adopts a C2HC pre-PHD-type 2 zinc-finger fold. A PHD-type 8 zinc finger spans residues 4460-4507 (MKCVFCHKTGATSGCHRFRCTNIYHFTCAIKAQCMFFKDKTMLCPMHK). The 61-residue stretch at 4545–4605 (DHTFRVGSLI…CRYLCSIEEK (61 aa)) folds into the FYR N-terminal domain. Residues 4606–4691 (DGRPVFVIRI…EACENYTFRY (86 aa)) enclose the FYR C-terminal domain. The WDR5 interaction motif (WIN) motif lies at 4707–4712 (GCARSE). Positions 4771–4887 (SNVYLARSRI…KGEELCYDYK (117 aa)) constitute an SET domain. S-adenosyl-L-methionine is bound by residues tyrosine 4825 and 4848–4849 (NH). Zn(2+) contacts are provided by cysteine 4851, cysteine 4899, cysteine 4901, and cysteine 4906. The Post-SET domain occupies 4895 to 4911 (HKIPCHCGAVNCRKWMN).

It belongs to the class V-like SAM-binding methyltransferase superfamily. Histone-lysine methyltransferase family. TRX/MLL subfamily. As to quaternary structure, component of the MLL3 complex (also named ASCOM complex), at least composed of catalytic subunit KMT2C/MLL3, ASH2L, RBBP5, WDR5, NCOA6, DPY30, KDM6A, PAXIP1/PTIP, PAGR1 and alpha- and beta-tubulin. Forms a core complex with the evolutionary conserved subcomplex WRAD composed of WDR5, RBBP5, ASH2L/ASH2 and DPY30 subunits; WRAD differentially stimulates the methyltransferase activity. Interacts (via WIN motif) with WDR5. In terms of tissue distribution, highly expressed in testis and ovary, followed by brain and liver. Also expressed in placenta, peripherical blood, fetal thymus, heart, lung and kidney. Within brain, expression was highest in hippocampus, caudate nucleus, and substantia nigra. Not detected in skeletal muscle and fetal liver.

The protein localises to the nucleus. It carries out the reaction L-lysyl(4)-[histone H3] + S-adenosyl-L-methionine = N(6)-methyl-L-lysyl(4)-[histone H3] + S-adenosyl-L-homocysteine + H(+). Histone methyltransferase that catalyzes methyl group transfer from S-adenosyl-L-methionine to the epsilon-amino group of 'Lys-4' of histone H3 (H3K4). Part of chromatin remodeling machinery predominantly forms H3K4me1 methylation marks at active chromatin sites where transcription and DNA repair take place. Likely plays a redundant role with KMT2D in enriching H3K4me1 mark on primed and active enhancer elements. This Homo sapiens (Human) protein is Histone-lysine N-methyltransferase 2C (KMT2C).